The chain runs to 390 residues: Monomeric sarcosine oxidase (390 aa).

6–36 lines the FAD pocket; that stretch reads DVIVVGAGSMGMAAGYQLAKQGVKTLLVDAF. S-8alpha-FAD cysteine is present on Cys316.

As to quaternary structure, monomer. FAD serves as cofactor.

The protein localises to the cytoplasm. It catalyses the reaction sarcosine + O2 + H2O = formaldehyde + glycine + H2O2. Pyrrole-2-carboxylate is a competitive inhibitor. N-(cyclopropyl)glycine (CPG) is a mechanism-based inhibitor and inactivates the enzyme by covalently modifying the flavin. Functionally, catalyzes the oxidative demethylation of sarcosine. Can also oxidize other secondary amino acids such as N-methyl-L-alanine. This is Monomeric sarcosine oxidase (soxA) from Bacillus sp. (strain B-0618).